A 36-amino-acid polypeptide reads, in one-letter code: Alpha-amylase inhibitor AI-3688 (36 aa).

Cys-9 and Cys-25 form a disulfide bridge.

Inhibits mammalian alpha-amylases specifically but has no action on plant and microbial alpha-amylases. This Kitasatospora aureofaciens (Streptomyces aureofaciens) protein is Alpha-amylase inhibitor AI-3688.